A 345-amino-acid polypeptide reads, in one-letter code: tRNA N6-adenosine threonylcarbamoyltransferase (345 aa).

Residues His111 and His115 each coordinate Fe cation. Substrate contacts are provided by residues 134–138 (LVSGG), Asp167, Gly180, and Asn276. Residue Asp304 participates in Fe cation binding.

The protein belongs to the KAE1 / TsaD family. It depends on Fe(2+) as a cofactor.

The protein localises to the cytoplasm. The enzyme catalyses L-threonylcarbamoyladenylate + adenosine(37) in tRNA = N(6)-L-threonylcarbamoyladenosine(37) in tRNA + AMP + H(+). In terms of biological role, required for the formation of a threonylcarbamoyl group on adenosine at position 37 (t(6)A37) in tRNAs that read codons beginning with adenine. Is involved in the transfer of the threonylcarbamoyl moiety of threonylcarbamoyl-AMP (TC-AMP) to the N6 group of A37, together with TsaE and TsaB. TsaD likely plays a direct catalytic role in this reaction. This is tRNA N6-adenosine threonylcarbamoyltransferase from Bordetella avium (strain 197N).